We begin with the raw amino-acid sequence, 603 residues long: UvrABC system protein C (603 aa).

Residues aspartate 15–isoleucine 92 enclose the GIY-YIG domain. The UVR domain occupies lysine 197–threonine 232.

Belongs to the UvrC family. In terms of assembly, interacts with UvrB in an incision complex.

The protein localises to the cytoplasm. The UvrABC repair system catalyzes the recognition and processing of DNA lesions. UvrC both incises the 5' and 3' sides of the lesion. The N-terminal half is responsible for the 3' incision and the C-terminal half is responsible for the 5' incision. This Listeria innocua serovar 6a (strain ATCC BAA-680 / CLIP 11262) protein is UvrABC system protein C.